A 708-amino-acid chain; its full sequence is Nicastrin (708 aa).

Residues 1–27 (MATTRGGSGPDPGSRGLLLLSFSVVLA) form the signal peptide. Over 28–668 (GLCGGNSVER…IFLIASKELE (641 aa)) the chain is Lumenal. N-linked (GlcNAc...) asparagine glycans are attached at residues Asn-44, Asn-54, and Asn-128. A disulfide bridge links Cys-49 with Cys-61. The cysteines at positions 139 and 158 are disulfide-linked. 2 N-linked (GlcNAc...) asparagine glycosylation sites follow: Asn-186 and Asn-203. 2 cysteine pairs are disulfide-bonded: Cys-194/Cys-212 and Cys-229/Cys-247. 11 N-linked (GlcNAc...) asparagine glycosylation sites follow: Asn-263, Asn-386, Asn-434, Asn-463, Asn-505, Asn-529, Asn-561, Asn-572, Asn-579, Asn-593, and Asn-611. Cys-585 and Cys-619 are oxidised to a cystine. A helical membrane pass occupies residues 669–689 (FITLIVGFSTLVFSLIVTYCI). At 690–708 (NAKADVLFVAPREPGAVSY) the chain is on the cytoplasmic side.

It belongs to the nicastrin family. As to quaternary structure, component of the gamma-secretase complex. The functional gamma-secretase complex is composed of at least four polypeptides: a presenilin homodimer (PSEN1 or PSEN2), nicastrin (NCSTN), APH1 (APH1A or APH1B) and PEN2. Binds to proteolytic processed C-terminal fragments C83 and C99 of the amyloid precursor protein (APP). Interacts with PSEN1 and PSEN2. N-glycosylated.

The protein resides in the membrane. It is found in the cytoplasmic vesicle membrane. It localises to the melanosome. Its function is as follows. Essential subunit of the gamma-secretase complex, an endoprotease complex that catalyzes the intramembrane cleavage of integral membrane proteins such as Notch receptors and APP (amyloid-beta precursor protein). The gamma-secretase complex plays a role in Notch and Wnt signaling cascades and regulation of downstream processes via its role in processing key regulatory proteins, and by regulating cytosolic CTNNB1 levels. The polypeptide is Nicastrin (Ncstn) (Mus musculus (Mouse)).